The sequence spans 468 residues: Trehalose-binding lipoprotein LpqY (468 aa).

The first 25 residues, M1–A25, serve as a signal peptide directing secretion. C26 is lipidated: N-palmitoyl cysteine. A lipid anchor (S-diacylglycerol cysteine) is attached at C26. C54 and C372 form a disulfide bridge. Residues D97, N151, W276, F278, G351, and R421 each coordinate alpha,alpha-trehalose.

This sequence belongs to the bacterial solute-binding protein 1 family. In terms of assembly, monomer. The complex is composed of two ATP-binding proteins (SugC), two transmembrane proteins (SugA and SugB) and a solute-binding protein (LpqY).

The protein resides in the cell inner membrane. Its function is as follows. Part of the ABC transporter complex LpqY-SugA-SugB-SugC, which is highly specific for uptake of trehalose. Involved in the recycling of extracellular trehalose released from trehalose-containing molecules synthesized by M.tuberculosis. Trehalose uptake is essential for virulence. The protein is Trehalose-binding lipoprotein LpqY (lpqY) of Mycobacterium tuberculosis (strain CDC 1551 / Oshkosh).